Consider the following 933-residue polypeptide: Dual 3',5'-cyclic-AMP and -GMP phosphodiesterase 11A (933 aa).

The disordered stretch occupies residues 42–121 (HTSGQGASSL…LQRRASQKEL (80 aa)). Residues S162, S163, and S239 each carry the phosphoserine modification. GAF domains follow at residues 217-370 (DLTS…GIAI) and 402-558 (DLEK…GLGI). S424 lines the 3',5'-cyclic GMP pocket. In terms of domain architecture, PDEase spans 588 to 912 (SKAEVDKFKA…RKWEELHQKR (325 aa)). The active-site Proton donor is H664. H668, H704, D705, and D816 together coordinate a divalent metal cation. The segment at 913-933 (LQVSAASPDPASPMVAGEDRL) is disordered.

This sequence belongs to the cyclic nucleotide phosphodiesterase family. The cofactor is a divalent metal cation. As to expression, expressed in testis and developing spermatoza.

The protein localises to the cytoplasm. Its subcellular location is the cytosol. It catalyses the reaction 3',5'-cyclic GMP + H2O = GMP + H(+). The enzyme catalyses 3',5'-cyclic AMP + H2O = AMP + H(+). With respect to regulation, inhibited by 3-isobutyl-1-methylxanthine (IBMX), zaprinast and dipyridamole. cGMP acts as an allosteric activator. Functionally, plays a role in signal transduction by regulating the intracellular concentration of cyclic nucleotides cAMP and cGMP. Catalyzes the hydrolysis of both cAMP and cGMP to 5'-AMP and 5'-GMP, respectively. This Mus musculus (Mouse) protein is Dual 3',5'-cyclic-AMP and -GMP phosphodiesterase 11A (Pde11a).